The following is a 326-amino-acid chain: Thiamine thiazole synthase (326 aa).

Residues cysteine 87, 108 to 109 (EA), glycine 116, and valine 181 each bind substrate. Cysteine 215 bears the 2,3-didehydroalanine (Cys) mark. Residues aspartate 217, histidine 232, methionine 284, and 294–296 (RMG) contribute to the substrate site.

It belongs to the THI4 family. In terms of assembly, homooctamer. It depends on Fe cation as a cofactor. Post-translationally, during the catalytic reaction, a sulfide is transferred from Cys-215 to a reaction intermediate, generating a dehydroalanine residue.

The protein localises to the cytoplasm. It is found in the nucleus. The enzyme catalyses [ADP-thiazole synthase]-L-cysteine + glycine + NAD(+) = [ADP-thiazole synthase]-dehydroalanine + ADP-5-ethyl-4-methylthiazole-2-carboxylate + nicotinamide + 3 H2O + 2 H(+). Functionally, involved in biosynthesis of the thiamine precursor thiazole. Catalyzes the conversion of NAD and glycine to adenosine diphosphate 5-(2-hydroxyethyl)-4-methylthiazole-2-carboxylic acid (ADT), an adenylated thiazole intermediate. The reaction includes an iron-dependent sulfide transfer from a conserved cysteine residue of the protein to a thiazole intermediate. The enzyme can only undergo a single turnover, which suggests it is a suicide enzyme. May have additional roles in adaptation to various stress conditions and in DNA damage tolerance. This chain is Thiamine thiazole synthase, found in Sclerotinia sclerotiorum (strain ATCC 18683 / 1980 / Ss-1) (White mold).